The chain runs to 83 residues: U5-theraphotoxin-Hs1a 4 (83 aa).

The N-terminal stretch at 1–21 (MKTSMFLTLTGLVLLFVDCYA) is a signal peptide. Positions 22-49 (SESEEKEFPKELLSSIFAADSDFKVEER) are excised as a propeptide. Disulfide bonds link C51–C63, C56–C68, and C62–C75.

Belongs to the neurotoxin 10 (Hwtx-1) family. 51 (Hntx-8) subfamily. Hntx-8 sub-subfamily. Expressed by the venom gland.

It is found in the secreted. In terms of biological role, agglutinates erythrocytes. The sequence is that of U5-theraphotoxin-Hs1a 4 from Cyriopagopus schmidti (Chinese bird spider).